We begin with the raw amino-acid sequence, 787 residues long: MKKSFPTLLATLVWSALYSQHALADLAEQCMLGVPTYNRPLVTGDPNQLPVNIQADKTEANYPDNAKFIGNVNIQQGNSIMTAEQVELSQLDPATQGSTPTRTITATGKVHYDDNQVILKGPKAWANLNTKDTDVYEGDYQMVGRQGRGSADKMKMRDSNRYTILENGSFTSCLPGDNSWSVVGSEVIQDREEQVAEIWNARFKIGGVPVFYSPYLQLPIGDKRRSGFLIPNAKYGSSNGFELLTPYYWNIAPNFDATITPHLQTKRGMQWQNEFRYLTTPGLGVIQFDWLPSDSEYAKTSQQDNNDTRWLLHWGHSGVMDQVWRFDADYTKVSDDRYFTDLDSHYGSTTDGYVTQKLSTGYANQNWNTTLSTRQFQVFSNATSRDVYRAEPQLDINYYQNDIGPVDMHLYGQAVKFTNVNDNRPEATRLHVEPTLNLPLANRWASLNTEAKLLATHYQQDNLDRYRADPTVSDVNKNALQSSVNRVMPQYKVDGKMVFEREMDWSQAYTQTLEPRAQYLYVPYRDQSSIHTYDSTLMQTDYSGLFRDRSYSGLDRIASANQIATGVTTRIYDDALVERFNASIGQIYYFDRPRTGDRNTSLDKSDNNGSQVWAGDSFLKIDDSWGVRGGLQYDNRLNEVALGDAVLEYRRDAERLVQLNYRYASPEYIRDMLPNVTNQGSQQGISQVGVTASWPIVERWAVVGAYYYDTKANQPANQLIGLQYNTCCWAVSVGYERKITDWNSASRSSEYDNKVSFNIELRGLSSNYGLGSDKMLRSGILPYQRAF.

The first 24 residues, 1–24, serve as a signal peptide directing secretion; sequence MKKSFPTLLATLVWSALYSQHALA.

Belongs to the LptD family. As to quaternary structure, component of the lipopolysaccharide transport and assembly complex. Interacts with LptE and LptA.

The protein resides in the cell outer membrane. In terms of biological role, together with LptE, is involved in the assembly of lipopolysaccharide (LPS) at the surface of the outer membrane. The protein is LPS-assembly protein LptD of Pectobacterium atrosepticum (strain SCRI 1043 / ATCC BAA-672) (Erwinia carotovora subsp. atroseptica).